Consider the following 522-residue polypeptide: MANQLRERHQGLKKKYRELIDGDPSLPPEKRNQVNLAQLLRDSREHNKQLSEELKELKQRLAEVHGDNKLLRMTIAKQRLGDEEVGTRHFPAHEREDLVQQLERAREQTEALEQSLKAATDELQDVRAERNVYQEKAHRLNLEINHILGSHENRILDIDALCMENRYLHERLMQLQEEVSLLKSNVMKYKSALESKKNCKVYGKSNSSALTGVLSAKQVQELLLSEENGCSLPVTSQSISDLKSLATALLETIHEKNMVIRHQRQTNKILGNRVAELERKLKTLEVSGLWSLPGITYNVSLGLGRRKAVIVLSDSQHVQSTTEQSVHLTPEAMVADEEIVTGEEVTEDTGLSADFSQDECQAGAVELNQNSDYFTHTYSVSATPQVSTPAENIQPVESMQSKTLALCDSERSACTAERSEQHDEDLQSGGHQSMSTEASLKALEEQAVENDNFSGDCESQGALEDSQPVTSETSGSFDCISGSESCTAEQQTERSIEEETEHASLNTSPPEQTSPHQECPSS.

Coiled-coil stretches lie at residues 1–196 (MANQ…LESK) and 260–287 (IRHQ…LEVS). Residues 413–522 (ACTAERSEQH…TSPHQECPSS (110 aa)) are disordered. 3 stretches are compositionally biased toward polar residues: residues 429 to 438 (GGHQSMSTEA), 467 to 490 (QPVT…TAEQ), and 503 to 522 (ASLN…CPSS).

This sequence belongs to the CCDC149 family.

This chain is Coiled-coil domain-containing protein 149-B (ccdc149b), found in Danio rerio (Zebrafish).